The sequence spans 295 residues: Acetaldehyde dehydrogenase 2 (295 aa).

An NAD(+)-binding site is contributed by 17–20 (TGNI). The active-site Acyl-thioester intermediate is C132. Residues 164-172 (SVGPASRAN) and N275 contribute to the NAD(+) site.

It belongs to the acetaldehyde dehydrogenase family.

It catalyses the reaction acetaldehyde + NAD(+) + CoA = acetyl-CoA + NADH + H(+). This is Acetaldehyde dehydrogenase 2 from Salinispora arenicola (strain CNS-205).